We begin with the raw amino-acid sequence, 602 residues long: Probable translation initiation factor IF-2 (602 aa).

The tr-type G domain maps to 9–229 (LRQPIVVVLG…GLTQNYMKNK (221 aa)). The segment at 18-25 (GHVDHGKT) is G1. 18-25 (GHVDHGKT) contacts GTP. The tract at residues 43 to 47 (EMTQE) is G2. The tract at residues 82–85 (DTPG) is G3. Residues 82–86 (DTPGH) and 136–139 (NKID) contribute to the GTP site. Residues 136-139 (NKID) form a G4 region. Positions 204–206 (SAK) are G5.

It belongs to the TRAFAC class translation factor GTPase superfamily. Classic translation factor GTPase family. IF-2 subfamily.

Functionally, function in general translation initiation by promoting the binding of the formylmethionine-tRNA to ribosomes. Seems to function along with eIF-2. In Sulfolobus acidocaldarius (strain ATCC 33909 / DSM 639 / JCM 8929 / NBRC 15157 / NCIMB 11770), this protein is Probable translation initiation factor IF-2 (infB).